The sequence spans 139 residues: Trafficking protein particle complex subunit 2-like protein (139 aa).

This sequence belongs to the TRAPP small subunits family. Sedlin subfamily. As to quaternary structure, component of the multisubunit TRAPP (transport protein particle) complex, which includes at least TRAPPC2, TRAPPC2L, TRAPPC3, TRAPPC3L, TRAPPC4, TRAPPC5, TRAPPC8, TRAPPC9, TRAPPC10, TRAPPC11 and TRAPPC12. Interacts with the heterodimer TRAPPC3-TRAPPC6A.

The protein localises to the cytoplasm. The protein resides in the perinuclear region. It localises to the endoplasmic reticulum. It is found in the golgi apparatus. Its function is as follows. May play a role in vesicular transport from endoplasmic reticulum to Golgi. The sequence is that of Trafficking protein particle complex subunit 2-like protein (Trappc2l) from Rattus norvegicus (Rat).